The sequence spans 229 residues: Synaptogyrin-3 (229 aa).

M1 carries the post-translational modification N-acetylmethionine. The 153-residue stretch at F20 to R172 folds into the MARVEL domain. 4 consecutive transmembrane segments (helical) span residues V30 to N50, F70 to V90, V105 to F125, and A148 to L168. A compositionally biased stretch (polar residues) spans Q209 to T219. Residues Q209–Y229 are disordered.

Belongs to the synaptogyrin family. As to quaternary structure, interacts (via N-terminus) with SLC6A3 (via N-terminus). May interact with VMAT2. As to expression, expressed in brain and placenta.

The protein resides in the cytoplasmic vesicle. The protein localises to the secretory vesicle. It localises to the synaptic vesicle membrane. Its subcellular location is the synapse. May play a role in regulated exocytosis. May indirectly regulate the activity of the plasma membrane dopamine transporter SLC6A3 and thereby regulate dopamine transport back from the synaptic cleft into the presynaptic terminal. The polypeptide is Synaptogyrin-3 (Homo sapiens (Human)).